The chain runs to 373 residues: Queuine tRNA-ribosyltransferase (373 aa).

Aspartate 93 (proton acceptor) is an active-site residue. Residues 93 to 97 (DSGGF), aspartate 147, glutamine 191, and glycine 218 each bind substrate. Residues 249–255 (GVGAPRD) are RNA binding. The active-site Nucleophile is the aspartate 268. The tract at residues 273 to 277 (TRNAR) is RNA binding; important for wobble base 34 recognition. Zn(2+) is bound by residues cysteine 306, cysteine 308, cysteine 311, and histidine 337.

It belongs to the queuine tRNA-ribosyltransferase family. As to quaternary structure, homodimer. Within each dimer, one monomer is responsible for RNA recognition and catalysis, while the other monomer binds to the replacement base PreQ1. The cofactor is Zn(2+).

It carries out the reaction 7-aminomethyl-7-carbaguanine + guanosine(34) in tRNA = 7-aminomethyl-7-carbaguanosine(34) in tRNA + guanine. It functions in the pathway tRNA modification; tRNA-queuosine biosynthesis. Catalyzes the base-exchange of a guanine (G) residue with the queuine precursor 7-aminomethyl-7-deazaguanine (PreQ1) at position 34 (anticodon wobble position) in tRNAs with GU(N) anticodons (tRNA-Asp, -Asn, -His and -Tyr). Catalysis occurs through a double-displacement mechanism. The nucleophile active site attacks the C1' of nucleotide 34 to detach the guanine base from the RNA, forming a covalent enzyme-RNA intermediate. The proton acceptor active site deprotonates the incoming PreQ1, allowing a nucleophilic attack on the C1' of the ribose to form the product. After dissociation, two additional enzymatic reactions on the tRNA convert PreQ1 to queuine (Q), resulting in the hypermodified nucleoside queuosine (7-(((4,5-cis-dihydroxy-2-cyclopenten-1-yl)amino)methyl)-7-deazaguanosine). The chain is Queuine tRNA-ribosyltransferase from Solidesulfovibrio magneticus (strain ATCC 700980 / DSM 13731 / RS-1) (Desulfovibrio magneticus).